Here is a 332-residue protein sequence, read N- to C-terminus: Beta-ketoacyl-[acyl-carrier-protein] synthase III (332 aa).

Catalysis depends on residues C116 and H255. The interval 256–260 (QANLR) is ACP-binding. Residue N285 is part of the active site.

This sequence belongs to the thiolase-like superfamily. FabH family. Homodimer.

Its subcellular location is the cytoplasm. The enzyme catalyses malonyl-[ACP] + acetyl-CoA + H(+) = 3-oxobutanoyl-[ACP] + CO2 + CoA. It participates in lipid metabolism; fatty acid biosynthesis. Its function is as follows. Catalyzes the condensation reaction of fatty acid synthesis by the addition to an acyl acceptor of two carbons from malonyl-ACP. Catalyzes the first condensation reaction which initiates fatty acid synthesis and may therefore play a role in governing the total rate of fatty acid production. Possesses both acetoacetyl-ACP synthase and acetyl transacylase activities. Its substrate specificity determines the biosynthesis of branched-chain and/or straight-chain of fatty acids. The chain is Beta-ketoacyl-[acyl-carrier-protein] synthase III from Helicobacter hepaticus (strain ATCC 51449 / 3B1).